The sequence spans 298 residues: Quinolinate synthase (298 aa).

Iminosuccinate-binding residues include histidine 19 and serine 36. Cysteine 81 is a binding site for [4Fe-4S] cluster. Iminosuccinate-binding positions include 107–109 (YVN) and serine 124. Residue cysteine 168 coordinates [4Fe-4S] cluster. Iminosuccinate-binding positions include 193–195 (HPE) and threonine 210. Position 254 (cysteine 254) interacts with [4Fe-4S] cluster.

Belongs to the quinolinate synthase family. Type 2 subfamily. [4Fe-4S] cluster serves as cofactor.

It localises to the cytoplasm. The enzyme catalyses iminosuccinate + dihydroxyacetone phosphate = quinolinate + phosphate + 2 H2O + H(+). The protein operates within cofactor biosynthesis; NAD(+) biosynthesis; quinolinate from iminoaspartate: step 1/1. With respect to regulation, inhibited by 4,5 dithiohydroxyphthalic acid (DTHPA) analogs, which bind to the catalytic iron site of the [4Fe-4S] cluster. Functionally, catalyzes the condensation of iminoaspartate with dihydroxyacetone phosphate to form quinolinate. The sequence is that of Quinolinate synthase from Thermotoga maritima (strain ATCC 43589 / DSM 3109 / JCM 10099 / NBRC 100826 / MSB8).